A 352-amino-acid chain; its full sequence is Rhodopsin (352 aa).

The Extracellular segment spans residues M1 to A36. N-linked (GlcNAc...) asparagine glycans are attached at residues N2 and N15. A helical transmembrane segment spans residues Y37–V61. Residues T62–N73 are Cytoplasmic-facing. A helical transmembrane segment spans residues Y74–Y96. The Extracellular segment spans residues T97–C110. A disulfide bridge links C110 with C187. A helical transmembrane segment spans residues N111–I133. The 'Ionic lock' involved in activated form stabilization signature appears at E134 to W136. Topologically, residues E134 to H152 are cytoplasmic. Residues A153–V173 form a helical membrane-spanning segment. Residues G174–S202 are Extracellular-facing. A glycan (N-linked (GlcNAc...) asparagine) is linked at N200. A helical membrane pass occupies residues F203–G224. Over R225 to R252 the chain is Cytoplasmic. The chain crosses the membrane as a helical span at residues M253–Y274. Over I275–L286 the chain is Extracellular. A helical membrane pass occupies residues F287–C308. K296 is subject to N6-(retinylidene)lysine. Residues M309–A352 lie on the Cytoplasmic side of the membrane. 2 S-palmitoyl cysteine lipidation sites follow: C322 and C323. The tract at residues E331–A352 is disordered. Positions S342–A352 are enriched in low complexity.

This sequence belongs to the G-protein coupled receptor 1 family. Opsin subfamily. Phosphorylated on some or all of the serine and threonine residues present in the C-terminal region. In terms of processing, contains one covalently linked retinal chromophore.

Its subcellular location is the membrane. It localises to the cell projection. It is found in the cilium. The protein localises to the photoreceptor outer segment. Its function is as follows. Photoreceptor required for image-forming vision at low light intensity. While most salt water fish species use retinal as chromophore, most freshwater fish use 3-dehydroretinal, or a mixture of retinal and 3-dehydroretinal. Light-induced isomerization of 11-cis to all-trans retinal triggers a conformational change that activates signaling via G-proteins. Subsequent receptor phosphorylation mediates displacement of the bound G-protein alpha subunit by arrestin and terminates signaling. This chain is Rhodopsin (rho), found in Gobius niger (Black goby).